The primary structure comprises 78 residues: ATP synthase subunit c (78 aa).

Transmembrane regions (helical) follow at residues 11 to 31 and 53 to 73; these read FIGAGLATIGLGGAGIGVGHV and LFVGIAFAEALGIFSFLIALL.

It belongs to the ATPase C chain family. In terms of assembly, F-type ATPases have 2 components, F(1) - the catalytic core - and F(0) - the membrane proton channel. F(1) has five subunits: alpha(3), beta(3), gamma(1), delta(1), epsilon(1). F(0) has four main subunits: a(1), b(1), b'(1) and c(10-14). The alpha and beta chains form an alternating ring which encloses part of the gamma chain. F(1) is attached to F(0) by a central stalk formed by the gamma and epsilon chains, while a peripheral stalk is formed by the delta, b and b' chains.

It localises to the cell inner membrane. Functionally, f(1)F(0) ATP synthase produces ATP from ADP in the presence of a proton or sodium gradient. F-type ATPases consist of two structural domains, F(1) containing the extramembraneous catalytic core and F(0) containing the membrane proton channel, linked together by a central stalk and a peripheral stalk. During catalysis, ATP synthesis in the catalytic domain of F(1) is coupled via a rotary mechanism of the central stalk subunits to proton translocation. Key component of the F(0) channel; it plays a direct role in translocation across the membrane. A homomeric c-ring of between 10-14 subunits forms the central stalk rotor element with the F(1) delta and epsilon subunits. In Cereibacter sphaeroides (strain ATCC 17025 / ATH 2.4.3) (Rhodobacter sphaeroides), this protein is ATP synthase subunit c.